A 269-amino-acid chain; its full sequence is Ubiquinone/menaquinone biosynthesis C-methyltransferase UbiE (269 aa).

Residues Thr92, Asp113, and Asn141–Ala142 each bind S-adenosyl-L-methionine.

The protein belongs to the class I-like SAM-binding methyltransferase superfamily. MenG/UbiE family.

It carries out the reaction a 2-demethylmenaquinol + S-adenosyl-L-methionine = a menaquinol + S-adenosyl-L-homocysteine + H(+). The enzyme catalyses a 2-methoxy-6-(all-trans-polyprenyl)benzene-1,4-diol + S-adenosyl-L-methionine = a 5-methoxy-2-methyl-3-(all-trans-polyprenyl)benzene-1,4-diol + S-adenosyl-L-homocysteine + H(+). The protein operates within quinol/quinone metabolism; menaquinone biosynthesis; menaquinol from 1,4-dihydroxy-2-naphthoate: step 2/2. It functions in the pathway cofactor biosynthesis; ubiquinone biosynthesis. Its function is as follows. Methyltransferase required for the conversion of demethylmenaquinol (DMKH2) to menaquinol (MKH2) and the conversion of 2-polyprenyl-6-methoxy-1,4-benzoquinol (DDMQH2) to 2-polyprenyl-3-methyl-6-methoxy-1,4-benzoquinol (DMQH2). This chain is Ubiquinone/menaquinone biosynthesis C-methyltransferase UbiE, found in Brucella suis (strain ATCC 23445 / NCTC 10510).